We begin with the raw amino-acid sequence, 218 residues long: Probable transaldolase (218 aa).

Residue lysine 83 is the Schiff-base intermediate with substrate of the active site.

It belongs to the transaldolase family. Type 3B subfamily.

The protein localises to the cytoplasm. The enzyme catalyses D-sedoheptulose 7-phosphate + D-glyceraldehyde 3-phosphate = D-erythrose 4-phosphate + beta-D-fructose 6-phosphate. The protein operates within carbohydrate degradation; pentose phosphate pathway; D-glyceraldehyde 3-phosphate and beta-D-fructose 6-phosphate from D-ribose 5-phosphate and D-xylulose 5-phosphate (non-oxidative stage): step 2/3. Functionally, transaldolase is important for the balance of metabolites in the pentose-phosphate pathway. The chain is Probable transaldolase from Parvibaculum lavamentivorans (strain DS-1 / DSM 13023 / NCIMB 13966).